An 86-amino-acid chain; its full sequence is Small ribosomal subunit protein bS16 (86 aa).

Belongs to the bacterial ribosomal protein bS16 family.

In Borreliella burgdorferi (strain ATCC 35210 / DSM 4680 / CIP 102532 / B31) (Borrelia burgdorferi), this protein is Small ribosomal subunit protein bS16.